The following is a 107-amino-acid chain: Ig kappa chain V-VI region NQ2-17.4.1 (107 aa).

Residues 1 to 23 (QIVLTQSPAIMSASPGQKVTMTC) form a framework-1 region. A disulfide bond links C23 and C87. Residues 24-33 (SASSSVSYMH) form a complementarity-determining-1 region. The interval 34–48 (WYQQKSGTSPKRWIY) is framework-2. The segment at 49–55 (DTSKLAS) is complementarity-determining-2. Residues 56–87 (GVPARFSGSGSATSYSLTITSMQAEDAATYYC) form a framework-3 region. Positions 88 to 96 (QQWSSNPLT) are complementarity-determining-3. Residues 97–106 (FGAGTKLELK) are framework-4.

In terms of biological role, anti-2-phenyl oxazolone (PHOX) Antibody. This chain is Ig kappa chain V-VI region NQ2-17.4.1, found in Mus musculus (Mouse).